The following is a 451-amino-acid chain: AP-4 complex subunit mu (451 aa).

Residues 184-450 (REEIFVDIIE…VTQANSYVAR (267 aa)) enclose the MHD domain.

It belongs to the adaptor complexes medium subunit family. Adaptor protein complex 4 (AP-4) is a heterotetramer composed of two large adaptins (epsilon-type subunit and beta-type subunit), a medium adaptin (mu-type subunit) and a small adaptin (sigma-type subunit).

It is found in the golgi apparatus. The protein localises to the trans-Golgi network. The protein resides in the membrane. Its subcellular location is the coated pit. In terms of biological role, subunit of novel type of clathrin- or non-clathrin-associated protein coat involved in targeting proteins from the trans-Golgi network (TGN) to the endosomal-lysosomal system. The protein is AP-4 complex subunit mu (AP4M) of Arabidopsis thaliana (Mouse-ear cress).